The chain runs to 413 residues: Gamma-glutamyl phosphate reductase (413 aa).

The protein belongs to the gamma-glutamyl phosphate reductase family.

Its subcellular location is the cytoplasm. It catalyses the reaction L-glutamate 5-semialdehyde + phosphate + NADP(+) = L-glutamyl 5-phosphate + NADPH + H(+). It functions in the pathway amino-acid biosynthesis; L-proline biosynthesis; L-glutamate 5-semialdehyde from L-glutamate: step 2/2. In terms of biological role, catalyzes the NADPH-dependent reduction of L-glutamate 5-phosphate into L-glutamate 5-semialdehyde and phosphate. The product spontaneously undergoes cyclization to form 1-pyrroline-5-carboxylate. This Rhodococcus jostii (strain RHA1) protein is Gamma-glutamyl phosphate reductase.